Here is a 324-residue protein sequence, read N- to C-terminus: Putative S-adenosyl-L-methionine-dependent methyltransferase MMAR_1059 (324 aa).

S-adenosyl-L-methionine contacts are provided by residues aspartate 138 and 167 to 168 (DL).

The protein belongs to the UPF0677 family.

Its function is as follows. Exhibits S-adenosyl-L-methionine-dependent methyltransferase activity. In Mycobacterium marinum (strain ATCC BAA-535 / M), this protein is Putative S-adenosyl-L-methionine-dependent methyltransferase MMAR_1059.